Here is a 155-residue protein sequence, read N- to C-terminus: uncharacterized protein (155 aa).

The transit peptide at 1–17 directs the protein to the mitochondrion; the sequence is MMRGASKRSISSAAVLL. The tract at residues 111 to 155 is disordered; sequence WHRQQKRSQRRRSVAKYEQREEAARVEKEEREARDREMVRELFRR. A compositionally biased stretch (basic residues) spans 113 to 124; that stretch reads RQQKRSQRRRSV. The segment covering 125–155 has biased composition (basic and acidic residues); the sequence is AKYEQREEAARVEKEEREARDREMVRELFRR.

This sequence belongs to the prokaryotic/mitochondrial release factor family.

It is found in the mitochondrion. This is an uncharacterized protein from Saccharomyces cerevisiae (strain ATCC 204508 / S288c) (Baker's yeast).